The primary structure comprises 119 residues: Ribonuclease P protein component (119 aa).

The protein belongs to the RnpA family. In terms of assembly, consists of a catalytic RNA component (M1 or rnpB) and a protein subunit.

It carries out the reaction Endonucleolytic cleavage of RNA, removing 5'-extranucleotides from tRNA precursor.. RNaseP catalyzes the removal of the 5'-leader sequence from pre-tRNA to produce the mature 5'-terminus. It can also cleave other RNA substrates such as 4.5S RNA. The protein component plays an auxiliary but essential role in vivo by binding to the 5'-leader sequence and broadening the substrate specificity of the ribozyme. The sequence is that of Ribonuclease P protein component from Nitrosomonas europaea (strain ATCC 19718 / CIP 103999 / KCTC 2705 / NBRC 14298).